The chain runs to 822 residues: Dimethyl sulfoxide/trimethylamine N-oxide reductase (822 aa).

The segment at residues 1-42 is a signal peptide (tat-type signal); the sequence is MTKLSGQELHAELSRRAFLSYTAAVGALGLCGTSLLAQGARA. Mo-bis(molybdopterin guanine dinucleotide) is bound by residues Trp158, 158 to 160, Ser189, 232 to 233, 262 to 263, 283 to 285, 364 to 365, Arg368, Asn476, His480, 500 to 501, Arg523, Asp553, 683 to 686, Arg689, 691 to 693, Asn779, and 796 to 797; these read WKS, KT, IN, QTD, WS, QD, ASHP, HSQ, and GQ.

It belongs to the prokaryotic molybdopterin-containing oxidoreductase family. In terms of assembly, homodimer. Mo-bis(molybdopterin guanine dinucleotide) serves as cofactor. Predicted to be exported by the Tat system. The position of the signal peptide cleavage has been experimentally proven.

The protein resides in the periplasm. It catalyses the reaction dimethyl sulfide + a menaquinone + H2O = dimethyl sulfoxide + a menaquinol. The enzyme catalyses trimethylamine + 2 Fe(III)-[cytochrome c] + H2O = trimethylamine N-oxide + 2 Fe(II)-[cytochrome c] + 3 H(+). Its function is as follows. Catalyzes the reduction of dimethyl sulfoxide (DMSO) and trimethylamine N-oxide (TMAO) to dimethyl sulfide (DMS) and trimethylamine, respectively. The terminal DMSO reductase can also use various sulfoxides and N-oxide compounds as terminal electron acceptor in addition to DMSO and TMAO. The polypeptide is Dimethyl sulfoxide/trimethylamine N-oxide reductase (dmsA) (Cereibacter sphaeroides (Rhodobacter sphaeroides)).